The primary structure comprises 393 residues: Methylthioribose-1-phosphate isomerase (393 aa).

The active-site Proton donor is the Asp265.

Belongs to the eIF-2B alpha/beta/delta subunits family. MtnA subfamily.

The protein resides in the cytoplasm. It localises to the nucleus. It catalyses the reaction 5-(methylsulfanyl)-alpha-D-ribose 1-phosphate = 5-(methylsulfanyl)-D-ribulose 1-phosphate. It participates in amino-acid biosynthesis; L-methionine biosynthesis via salvage pathway; L-methionine from S-methyl-5-thio-alpha-D-ribose 1-phosphate: step 1/6. In terms of biological role, catalyzes the interconversion of methylthioribose-1-phosphate (MTR-1-P) into methylthioribulose-1-phosphate (MTRu-1-P). This chain is Methylthioribose-1-phosphate isomerase, found in Cryptococcus neoformans var. neoformans serotype D (strain B-3501A) (Filobasidiella neoformans).